We begin with the raw amino-acid sequence, 373 residues long: Glutamine synthetase (373 aa).

The residue at position 2 (alanine 2) is an N-acetylalanine. Residues 2-25 (ATSASSHLNKGIKQMYMSLPQGEK) form a required for glutamine-induced ubiquitination by CRL4(CRBN) and proteasomal degradation region. N6-acetyllysine occurs at positions 11 and 14. The GS beta-grasp domain maps to 24 to 106 (EKVQAMYIWV…VLCEVFKYNR (83 aa)). Tyrosine 104 carries the post-translational modification Phosphotyrosine. In terms of domain architecture, GS catalytic spans 113–373 (LRHICKRIMD…TGDEPFQYKN (261 aa)). Glutamate 134 serves as a coordination point for ATP. Mn(2+) is bound by residues glutamate 134, glutamate 136, glutamate 196, and glutamate 203. Position 203–208 (203–208 (EFQIGP)) interacts with ATP. Position 246-247 (246-247 (NW)) interacts with L-glutamate. Mn(2+) is bound at residue histidine 253. ATP-binding positions include 255-257 (NFS), arginine 319, and arginine 324. Arginine 319 contributes to the L-glutamate binding site. 336 to 338 (YFE) provides a ligand contact to ADP. Glutamate 338 contacts Mn(2+). Arginine 340 contributes to the L-glutamate binding site. Serine 343 is subject to Phosphoserine.

This sequence belongs to the glutamine synthetase family. As to quaternary structure, decamer; composed of two pentamers. Interacts with PALMD. Interacts with RHOJ. Interacts with BEST2; this interaction tethers a fraction of GLUL to the membrane, causing a decrease of cytosolic glutamine synthase (GS) activity and inhibits the chloride channel activity of BEST2 by affecting the gating at the aperture in the absence of intracellular glutamate. Requires Mg(2+) as cofactor. The cofactor is Mn(2+). Post-translationally, acetylated by EP300/p300; acetylation is stimulated by increased glutamine levels and promotes ubiquitin-mediated proteasomal degradation. In terms of processing, palmitoylated; undergoes autopalmitoylation. Ubiquitinated by ZNRF1. Ubiquitinated by the DCX (DDB1-CUL4-X-box) E3 ubiquitin-protein ligase complex called CRL4(CRBN), leading to proteasomal degradation. Expressed in microvascular endothelial cells.

It localises to the cytoplasm. It is found in the cytosol. The protein resides in the microsome. Its subcellular location is the mitochondrion. The protein localises to the cell membrane. The enzyme catalyses L-glutamate + NH4(+) + ATP = L-glutamine + ADP + phosphate + H(+). The catalysed reaction is L-cysteinyl-[protein] + hexadecanoyl-CoA = S-hexadecanoyl-L-cysteinyl-[protein] + CoA. With respect to regulation, glutamine synthetase activity is inhibited by methionine sulfoximine (MSO). In terms of biological role, glutamine synthetase that catalyzes the ATP-dependent conversion of glutamate and ammonia to glutamine. Its role depends on tissue localization: in the brain, it regulates the levels of toxic ammonia and converts neurotoxic glutamate to harmless glutamine, whereas in the liver, it is one of the enzymes responsible for the removal of ammonia. Plays a key role in ammonium detoxification during erythropoiesis: the glutamine synthetase activity is required to remove ammonium generated by porphobilinogen deaminase (HMBS) during heme biosynthesis to prevent ammonium accumulation and oxidative stress. Essential for proliferation of fetal skin fibroblasts. Independently of its glutamine synthetase activity, required for endothelial cell migration during vascular development. Involved in angiogenesis by regulating membrane localization and activation of the GTPase RHOJ, possibly by promoting RHOJ palmitoylation. May act as a palmitoyltransferase for RHOJ: able to autopalmitoylate and then transfer the palmitoyl group to RHOJ. Plays a role in ribosomal 40S subunit biogenesis. Through the interaction with BEST2, inhibits BEST2 channel activity by affecting the gating at the aperture in the absence of intracellular L-glutamate, but sensitizes BEST2 to intracellular L-glutamate, which promotes the opening of BEST2 and thus relieves its inhibitory effect on BEST2. The polypeptide is Glutamine synthetase (Mus musculus (Mouse)).